The sequence spans 289 residues: Diaminopimelate epimerase (289 aa).

Substrate-binding residues include Asn11 and Asn78. Cys87 acts as the Proton donor in catalysis. Residues 88–89 (GN), Asn163, Asn199, and 217–218 (ER) each bind substrate. The active-site Proton acceptor is Cys226. 227 to 228 (GT) contributes to the substrate binding site.

Belongs to the diaminopimelate epimerase family. Homodimer.

Its subcellular location is the cytoplasm. The catalysed reaction is (2S,6S)-2,6-diaminopimelate = meso-2,6-diaminopimelate. Its pathway is amino-acid biosynthesis; L-lysine biosynthesis via DAP pathway; DL-2,6-diaminopimelate from LL-2,6-diaminopimelate: step 1/1. In terms of biological role, catalyzes the stereoinversion of LL-2,6-diaminopimelate (L,L-DAP) to meso-diaminopimelate (meso-DAP), a precursor of L-lysine and an essential component of the bacterial peptidoglycan. The sequence is that of Diaminopimelate epimerase from Rhodococcus jostii (strain RHA1).